The primary structure comprises 274 residues: Orotidine 5'-phosphate decarboxylase (274 aa).

Residues Asp-40, 62 to 64, 93 to 102, Tyr-227, and Arg-245 contribute to the substrate site; these read KTH and DRKFVDIGNT. Lys-95 functions as the Proton donor in the catalytic mechanism.

Belongs to the OMP decarboxylase family.

The catalysed reaction is orotidine 5'-phosphate + H(+) = UMP + CO2. The protein operates within pyrimidine metabolism; UMP biosynthesis via de novo pathway; UMP from orotate: step 2/2. The polypeptide is Orotidine 5'-phosphate decarboxylase (URA3) (Coccidioides posadasii (strain RMSCC 757 / Silveira) (Valley fever fungus)).